The sequence spans 526 residues: Histidine-rich glycoprotein (526 aa).

Positions A1–A8 are cleaved as a signal peptide. 2 consecutive Cystatin domains span residues L9–A126 and N127–G243. 6 disulfide bridges follow: C14-C505, C68-C79, C95-C116, C193-C415, C207-C230, and C272-C302. The segment at W31 to K74 is interaction with ATP5F1A. Residues N115 and N192 are each glycosylated (N-linked (GlcNAc...) asparagine). N-linked (GlcNAc...) asparagine glycosylation occurs at N240. The segment at G243–F449 is disordered. The span at D260–K269 shows a compositional bias: basic residues. N310 carries N-linked (GlcNAc...) asparagine glycosylation. Over residues P328 to H346 the composition is skewed to basic residues. Pro residues predominate over residues G347–G401. Over residues G408–Q429 the composition is skewed to basic and acidic residues. A compositionally biased stretch (basic residues) spans H438–F449. N485 carries N-linked (GlcNAc...) asparagine glycosylation.

As to quaternary structure, interacts with THBS1 (via the TSP type I repeats); the interaction blocks the antiangiogenic effect of THBS1 with CD36. Interacts with THBS2; the interaction blocks the antiangiogenic effect of THBS2 with CD36. Interacts with HPSE; the interaction is enhanced at acidic pH, partially inhibits binding of HPSE to cell surface receptors and modulates its enzymatic activity. Interacts (via the HRR domain) with TMP1; the interaction partially mediates the antiangiogenic properties of HRG. Interacts with kappa and lambda light chains of IgG molecules. Interacts with ATP5F1A; the interaction occurs on the surface of T-cells and alters their cell morphology in concert with CONA. Binds IgG molecules containing kappa and lambda light chains and inhibits the formation of insoluble immunoglobulin complexes. Interacts with F12; the interaction, which is enhanced in the presence of zinc ions and inhibited by heparin-binding to HRG, inhibits factor XII autoactivation and contact-initiated coagulation. Interacts with PLG (via its Kringle domains); the interaction tethers PLG to the cell surface and enhances its activation. Interacts (via the HRR domain) with TPM1; the interaction appears to contribute to the antiangiogenic properties of the HRR domain. N-glycosylated. In terms of processing, proteolytic cleavage produces several HRG fragments which are mostly disulfide-linked and, therefore, not released. On platelet activation, may release a 33 kDa antiangiogenic peptide which encompasses the HRR.

It localises to the secreted. Functionally, plasma glycoprotein that binds a number of ligands such as heme, heparin, heparan sulfate, thrombospondin, plasminogen, and divalent metal ions. Inhibits rosette formation. Acts as an adapter protein and implicated in regulating many processes such as immune complex and pathogen clearance, cell adhesion, angiogenesis, coagulation and fibrinolysis. Mediates clearance of necrotic cells through enhancing the phagocytosis of necrotic cells in a heparan sulfate-dependent pathway. This process can be regulated by the presence of certain HRG ligands such as heparin and zinc ions. Binds to IgG subclasses of immunoglobins containing kappa and lambda light chains with different affinities regulating their clearance and inhibiting the formation of insoluble immune complexes. Binds T-cells and alters the cell morphology Modulates angiogenesis by blocking the CD6-mediated antiangiongenic effect of thrombospondins, THBS1 and THBS2. Tethers plasminogen to the cell surface. This is Histidine-rich glycoprotein (HRG) from Oryctolagus cuniculus (Rabbit).